Consider the following 834-residue polypeptide: Glycerol-3-phosphate acyltransferase (834 aa).

The HXXXXD motif signature appears at 309–314; sequence CHRSHI.

It belongs to the GPAT/DAPAT family.

The protein resides in the cell inner membrane. It catalyses the reaction sn-glycerol 3-phosphate + an acyl-CoA = a 1-acyl-sn-glycero-3-phosphate + CoA. It functions in the pathway phospholipid metabolism; CDP-diacylglycerol biosynthesis; CDP-diacylglycerol from sn-glycerol 3-phosphate: step 1/3. The chain is Glycerol-3-phosphate acyltransferase from Pseudomonas paraeruginosa (strain DSM 24068 / PA7) (Pseudomonas aeruginosa (strain PA7)).